The chain runs to 257 residues: Glucose-1-phosphate cytidylyltransferase (257 aa).

Residues 6-10 (LAGGL), 11-13 (GTR), Lys23, Ser104, Arg109, and Gly128 each bind substrate. The Mg(2+) site is built by Asp129 and Asp234.

It belongs to the glucose-1-phosphate cytidylyltransferase family. In terms of assembly, homohexamer. Requires Mg(2+) as cofactor.

It carries out the reaction alpha-D-glucose 1-phosphate + CTP + H(+) = CDP-D-glucose + diphosphate. It participates in nucleotide-sugar biosynthesis; CDP-3,6-dideoxy-D-mannose biosynthesis; CDP-3,6-dideoxy-D-mannose from CTP and alpha-D-glucose 1-phosphate: step 1/5. The protein operates within bacterial outer membrane biogenesis; LPS O-antigen biosynthesis. Involved in the biosynthesis of the tyvelose, a 3,6-dideoxyhexose found in the O-antigen of the surface lipopolysaccharides. It catalyzes the transfer of a CMP moiety from CTP to glucose 1-phosphate. This chain is Glucose-1-phosphate cytidylyltransferase (rfbF), found in Salmonella typhimurium (strain LT2 / SGSC1412 / ATCC 700720).